Reading from the N-terminus, the 138-residue chain is Putative pre-16S rRNA nuclease (138 aa).

Belongs to the YqgF nuclease family.

It localises to the cytoplasm. Its function is as follows. Could be a nuclease involved in processing of the 5'-end of pre-16S rRNA. This Escherichia coli O157:H7 protein is Putative pre-16S rRNA nuclease.